Reading from the N-terminus, the 653-residue chain is TRAF3-interacting protein 1 (653 aa).

The segment at 1–306 (MNAAVVRRTQ…ADKSEKKADI (306 aa)) is abolishes microtubules binding when missing. Residues 134 to 467 (GDSRGRVLRT…DSQNSDNEDD (334 aa)) are disordered. Composition is skewed to basic and acidic residues over residues 145–305 (KAQE…KKAD), 325–335 (NSLEGRKEDNI), and 370–384 (ENAE…KGDS). A DISC1-interaction domain region spans residues 229-653 (RAKQDRDRNN…VHSINLSSRR (425 aa)). Residue Ser-437 is modified to Phosphoserine. The span at 448 to 462 (SGKTVSTVIIDSQNS) shows a compositional bias: polar residues. Positions 533 to 628 (AWKKEKDIVS…IKDQQDKICA (96 aa)) form a coiled coil.

Belongs to the TRAF3IP1 family. Component of the IFT complex B, at least composed of IFT20, IFT22, IFT25, IFT27, IFT46, IFT52, TRAF3IP1/IFT54, IFT57, IFT74, IFT80, IFT81, and IFT88. Interacts with IFT88. Interacts with IL13RA1. Binds to microtubules, TRAF3 and DISC1. Interacts with MAP4.

The protein localises to the cytoplasm. Its subcellular location is the cytoskeleton. It localises to the cell projection. The protein resides in the cilium. It is found in the cilium axoneme. The protein localises to the cilium basal body. Plays an inhibitory role on IL13 signaling by binding to IL13RA1. Involved in suppression of IL13-induced STAT6 phosphorylation, transcriptional activity and DNA-binding. Recruits TRAF3 and DISC1 to the microtubules. Involved in kidney development and epithelial morphogenesis. Involved in the regulation of microtubule cytoskeleton organization. Is a negative regulator of microtubule stability, acting through the control of MAP4 levels. Involved in ciliogenesis. The sequence is that of TRAF3-interacting protein 1 (Traf3ip1) from Rattus norvegicus (Rat).